A 700-amino-acid polypeptide reads, in one-letter code: Cap-specific mRNA (nucleoside-2'-O-)-methyltransferase 2 (700 aa).

Residues 1–21 (MSFRSSPQGKPHPMTDYQSIR) form a disordered region. An Adrift-type SAM-dependent 2'-O-MTase domain is found at 109–321 (EFVTVAWCKL…VYVICLNYNK (213 aa)). Residue Lys117 is part of the active site. Residues Gly143, Trp164, and Asp234 each contribute to the S-adenosyl-L-methionine site. Asp234 is an active-site residue. The active-site Proton acceptor is the Lys274.

The protein resides in the nucleus. The catalysed reaction is a 5'-end (N(7)-methyl 5'-triphosphoguanosine)-(2'-O-methyl-ribonucleoside)-(ribonucleotide) in mRNA + S-adenosyl-L-methionine = a 5'-end (N(7)-methyl 5'-triphosphoguanosine)-(2'-O-methyl-ribonucleoside)-(2'-O-methyl-ribonucleotide) in mRNA + S-adenosyl-L-homocysteine + H(+). Its function is as follows. Probable S-adenosyl-L-methionine-dependent methyltransferase that mediates mRNA cap2 2'-O-ribose methylation to the 5'-cap structure of mRNAs. May methylate the ribose of the second nucleotide of a m(7)GpppG-capped mRNA (cap0) to produce m(7)GpppRmpNm (cap2). Regulates expression of tracheal genes required for pathfinding on the segmental nerve. This chain is Cap-specific mRNA (nucleoside-2'-O-)-methyltransferase 2 (cmtr2), found in Drosophila melanogaster (Fruit fly).